A 463-amino-acid chain; its full sequence is L-seryl-tRNA(Sec) selenium transferase (463 aa).

Position 295 is an N6-(pyridoxal phosphate)lysine (Lys-295).

The protein belongs to the SelA family. In terms of assembly, homodecamer; pentamer of dimers. Binds only one seryl-tRNA(Sec) per dimer. The cofactor is pyridoxal 5'-phosphate.

It is found in the cytoplasm. It catalyses the reaction L-seryl-tRNA(Sec) + selenophosphate + H(+) = L-selenocysteinyl-tRNA(Sec) + phosphate. It participates in aminoacyl-tRNA biosynthesis; selenocysteinyl-tRNA(Sec) biosynthesis; selenocysteinyl-tRNA(Sec) from L-seryl-tRNA(Sec) (bacterial route): step 1/1. In terms of biological role, converts seryl-tRNA(Sec) to selenocysteinyl-tRNA(Sec) required for selenoprotein biosynthesis. The polypeptide is L-seryl-tRNA(Sec) selenium transferase (Salmonella paratyphi A (strain AKU_12601)).